A 306-amino-acid polypeptide reads, in one-letter code: Ribosomal RNA small subunit methyltransferase H (306 aa).

Residues 37-39, aspartate 56, aspartate 102, and glutamine 109 contribute to the S-adenosyl-L-methionine site; that span reads GGH.

The protein belongs to the methyltransferase superfamily. RsmH family.

The protein localises to the cytoplasm. The enzyme catalyses cytidine(1402) in 16S rRNA + S-adenosyl-L-methionine = N(4)-methylcytidine(1402) in 16S rRNA + S-adenosyl-L-homocysteine + H(+). Specifically methylates the N4 position of cytidine in position 1402 (C1402) of 16S rRNA. The sequence is that of Ribosomal RNA small subunit methyltransferase H from Nautilia profundicola (strain ATCC BAA-1463 / DSM 18972 / AmH).